Reading from the N-terminus, the 398-residue chain is Succinate--CoA ligase [ADP-forming] subunit beta (398 aa).

The ATP-grasp domain occupies 9 to 254; that stretch reads KRLLHEYGAP…LSEEDPKEIE (246 aa). ATP contacts are provided by residues K46, 53–55, E109, A112, and E117; that span reads GRG. Residues N209 and D223 each coordinate Mg(2+). Residues N274 and 331-333 each bind substrate; that span reads GIM.

The protein belongs to the succinate/malate CoA ligase beta subunit family. As to quaternary structure, heterotetramer of two alpha and two beta subunits. It depends on Mg(2+) as a cofactor.

It catalyses the reaction succinate + ATP + CoA = succinyl-CoA + ADP + phosphate. It carries out the reaction GTP + succinate + CoA = succinyl-CoA + GDP + phosphate. It participates in carbohydrate metabolism; tricarboxylic acid cycle; succinate from succinyl-CoA (ligase route): step 1/1. Its function is as follows. Succinyl-CoA synthetase functions in the citric acid cycle (TCA), coupling the hydrolysis of succinyl-CoA to the synthesis of either ATP or GTP and thus represents the only step of substrate-level phosphorylation in the TCA. The beta subunit provides nucleotide specificity of the enzyme and binds the substrate succinate, while the binding sites for coenzyme A and phosphate are found in the alpha subunit. The sequence is that of Succinate--CoA ligase [ADP-forming] subunit beta from Bartonella quintana (strain Toulouse) (Rochalimaea quintana).